A 295-amino-acid chain; its full sequence is Glutamyl-Q tRNA(Asp) synthetase (295 aa).

L-glutamate is bound by residues Arg9–Thr13 and Glu45. The 'HIGH' region motif lies at Pro12 to Ser22. Zn(2+) is bound by residues Cys101, Cys103, Tyr115, and Cys119. Tyr172 and Arg190 together coordinate L-glutamate. The 'KMSKS' region signature appears at Lys228 to Ser232. Lys231 serves as a coordination point for ATP.

This sequence belongs to the class-I aminoacyl-tRNA synthetase family. GluQ subfamily. It depends on Zn(2+) as a cofactor.

Its function is as follows. Catalyzes the tRNA-independent activation of glutamate in presence of ATP and the subsequent transfer of glutamate onto a tRNA(Asp). Glutamate is transferred on the 2-amino-5-(4,5-dihydroxy-2-cyclopenten-1-yl) moiety of the queuosine in the wobble position of the QUC anticodon. This Pseudomonas putida (strain W619) protein is Glutamyl-Q tRNA(Asp) synthetase.